The following is a 326-amino-acid chain: MFISISAGIVTFLLTLVEIPAFIQFYRKAQITGQQMHEDVKQHQAKAGTPTMGGLVFLITSVLVAFFFALFSSQFSNNVGMILFILVLYGLVGFLDDFLKVFRKINEGLNPKQKLALQLLGGVIFYLFYERGGDILSVFGYPVHLGFFYIFFALFWLVGFSNAVNLTDGVDGLASISVVISLSAYGVIAYVQGQMDILLVILAMIGGLLGFFIFNHKPAKVFMGDVGSLALGGMLAAISMALHQEWTLLIIGIVYVFETTSVMMQVSYFKLTGGKRIFRMTPVHHHFELGGLSGKGNPWSEWKVDFFFWGVGLLASLLTLAILYLM.

9 consecutive transmembrane segments (helical) span residues 3–23 (ISIS…PAFI), 51–71 (TMGG…FALF), 79–99 (VGMI…DDFL), 115–135 (LALQ…GGDI), 138–158 (VFGY…FWLV), 169–189 (GVDG…GVIA), 195–215 (MDIL…FIFN), 221–243 (VFMG…MALH), and 306–326 (FFFW…LYLM).

Belongs to the glycosyltransferase 4 family. MraY subfamily. It depends on Mg(2+) as a cofactor.

Its subcellular location is the cell membrane. The enzyme catalyses UDP-N-acetyl-alpha-D-muramoyl-L-alanyl-gamma-D-glutamyl-L-lysyl-D-alanyl-D-alanine + di-trans,octa-cis-undecaprenyl phosphate = Mur2Ac(oyl-L-Ala-gamma-D-Glu-L-Lys-D-Ala-D-Ala)-di-trans,octa-cis-undecaprenyl diphosphate + UMP. The protein operates within cell wall biogenesis; peptidoglycan biosynthesis. Functionally, catalyzes the initial step of the lipid cycle reactions in the biosynthesis of the cell wall peptidoglycan: transfers peptidoglycan precursor phospho-MurNAc-pentapeptide from UDP-MurNAc-pentapeptide onto the lipid carrier undecaprenyl phosphate, yielding undecaprenyl-pyrophosphoryl-MurNAc-pentapeptide, known as lipid I. The chain is Phospho-N-acetylmuramoyl-pentapeptide-transferase from Streptococcus pneumoniae (strain 70585).